Reading from the N-terminus, the 901-residue chain is Protein translocase subunit SecA (901 aa).

ATP is bound by residues Gln-87, 105–109 (GEGKT), and Asp-512. Residues 859 to 901 (HQDDDSAAAAALAAQTGERKVGRNDPCPCGSGKKYKQCHGRLQ) are disordered. Residues Cys-885, Cys-887, Cys-896, and His-897 each coordinate Zn(2+). A compositionally biased stretch (basic residues) spans 891 to 901 (KKYKQCHGRLQ).

Belongs to the SecA family. Monomer and homodimer. Part of the essential Sec protein translocation apparatus which comprises SecA, SecYEG and auxiliary proteins SecDF-YajC and YidC. It depends on Zn(2+) as a cofactor.

It is found in the cell inner membrane. The protein resides in the cytoplasm. The catalysed reaction is ATP + H2O + cellular proteinSide 1 = ADP + phosphate + cellular proteinSide 2.. In terms of biological role, part of the Sec protein translocase complex. Interacts with the SecYEG preprotein conducting channel. Has a central role in coupling the hydrolysis of ATP to the transfer of proteins into and across the cell membrane, serving both as a receptor for the preprotein-SecB complex and as an ATP-driven molecular motor driving the stepwise translocation of polypeptide chains across the membrane. In Escherichia coli O139:H28 (strain E24377A / ETEC), this protein is Protein translocase subunit SecA.